A 147-amino-acid chain; its full sequence is Austinoid biosynthesis clusters protein H (147 aa).

It belongs to the trt14 isomerase family. As to quaternary structure, homodimer.

The protein operates within secondary metabolite biosynthesis; terpenoid biosynthesis. Part of the gene cluster B that mediates the biosynthesis of the fungal meroterpenoid acetoxydehydroaustin. The first step of the pathway is the synthesis of 3,5-dimethylorsellinic acid by the polyketide synthase ausA. 3,5-dimethylorsellinic acid is then prenylated by the polyprenyl transferase ausN. Further epoxidation by the FAD-dependent monooxygenase ausM and cyclization by the probable terpene cyclase ausL lead to the formation of protoaustinoid A. Protoaustinoid A is then oxidized to spiro-lactone preaustinoid A3 by the combined action of the FAD-binding monooxygenases ausB and ausC, and the dioxygenase ausE. Acid-catalyzed keto-rearrangement and ring contraction of the tetraketide portion of preaustinoid A3 by ausJ lead to the formation of preaustinoid A4. The aldo-keto reductase ausK, with the help of ausH, is involved in the next step by transforming preaustinoid A4 into isoaustinone which is in turn hydroxylated by the P450 monooxygenase ausI to form austinolide. The cytochrome P450 monooxygenase ausG then modifies austinolide to austinol. Austinol is further acetylated to austin by the O-acetyltransferase ausP, which spontaneously changes to dehydroaustin. The cytochrome P450 monooxygenase then converts dehydroaustin is into 7-dehydrodehydroaustin. The hydroxylation catalyzed by ausR permits the second O-acetyltransferase ausQ to add an additional acetyl group to the molecule, leading to the formation of acetoxydehydroaustin. Due to genetic rearrangements of the clusters and the subsequent loss of some enzymes, the end product of the Penicillium brasilianum austinoid biosynthesis clusters is acetoxydehydroaustin. This Penicillium brasilianum protein is Austinoid biosynthesis clusters protein H.